The sequence spans 243 residues: tRNA pseudouridine synthase A (243 aa).

Asp-53 serves as the catalytic Nucleophile. Tyr-111 provides a ligand contact to substrate.

The protein belongs to the tRNA pseudouridine synthase TruA family. Homodimer.

The catalysed reaction is uridine(38/39/40) in tRNA = pseudouridine(38/39/40) in tRNA. Functionally, formation of pseudouridine at positions 38, 39 and 40 in the anticodon stem and loop of transfer RNAs. In Pelodictyon phaeoclathratiforme (strain DSM 5477 / BU-1), this protein is tRNA pseudouridine synthase A.